The primary structure comprises 92 residues: C-C motif chemokine 5 (92 aa).

An N-terminal signal peptide occupies residues 1 to 23; the sequence is MKVSTAAFAVLLTAAAFCTPASA. Disulfide bonds link C33–C57 and C34–C73.

Belongs to the intercrine beta (chemokine CC) family.

Its subcellular location is the secreted. Functionally, chemoattractant for blood monocytes, memory T-helper cells and eosinophils. Causes the release of histamine from basophils and activates eosinophils. May activate several chemokine receptors including CCR1, CCR3, CCR4 and CCR5. May also be an agonist of the G protein-coupled receptor GPR75. Together with GPR75, may play a role in neuron survival through activation of a downstream signaling pathway involving the PI3, Akt and MAP kinases. By activating GPR75 may also play a role in insulin secretion by islet cells. This chain is C-C motif chemokine 5 (CCL5), found in Felis catus (Cat).